The following is a 483-amino-acid chain: Cobyric acid synthase (483 aa).

One can recognise a GATase cobBQ-type domain in the interval 251 to 438; it reads ALIVAVPMLP…LHGVFSADRF (188 aa). Catalysis depends on cysteine 333, which acts as the Nucleophile. Histidine 430 is a catalytic residue.

It belongs to the CobB/CobQ family. CobQ subfamily.

It participates in cofactor biosynthesis; adenosylcobalamin biosynthesis. In terms of biological role, catalyzes amidations at positions B, D, E, and G on adenosylcobyrinic A,C-diamide. NH(2) groups are provided by glutamine, and one molecule of ATP is hydrogenolyzed for each amidation. In Brucella suis biovar 1 (strain 1330), this protein is Cobyric acid synthase.